The following is a 196-amino-acid chain: Putative manganese efflux pump MntP (196 aa).

6 helical membrane passes run 3–23 (PASLILLAFAMSTDAFAASIG), 39–59 (IGAVFGVVEAIMPLLGWALGH), 67–87 (GVDHWIAFVMLALLGGHMIWA), 109–129 (IWLIAFTALATSIDAMAVGIT), 137–157 (IIAASVAIGLATALMVTLGTL), and 172–192 (ILGGLILIGIGIAVLYEHLAG).

The protein belongs to the MntP (TC 9.B.29) family.

The protein localises to the cell inner membrane. Functionally, probably functions as a manganese efflux pump. The chain is Putative manganese efflux pump MntP from Chromohalobacter salexigens (strain ATCC BAA-138 / DSM 3043 / CIP 106854 / NCIMB 13768 / 1H11).